A 357-amino-acid chain; its full sequence is Probable protein phosphatase 2C 60 (357 aa).

In terms of domain architecture, PPM-type phosphatase spans 23–329 (RYGLSSMQGW…DNMTMILVRF (307 aa)). Positions 57, 58, 272, and 320 each coordinate Mn(2+). Residues 331-357 (NPTPSETELKPEASQAEGNHDEPSSSN) form a disordered region. The span at 348 to 357 (GNHDEPSSSN) shows a compositional bias: basic and acidic residues.

The protein belongs to the PP2C family. Requires Mg(2+) as cofactor. It depends on Mn(2+) as a cofactor.

The enzyme catalyses O-phospho-L-seryl-[protein] + H2O = L-seryl-[protein] + phosphate. It carries out the reaction O-phospho-L-threonyl-[protein] + H2O = L-threonyl-[protein] + phosphate. The polypeptide is Probable protein phosphatase 2C 60 (Arabidopsis thaliana (Mouse-ear cress)).